The sequence spans 251 residues: 3-deoxy-manno-octulosonate cytidylyltransferase (251 aa).

The protein belongs to the KdsB family.

It is found in the cytoplasm. It carries out the reaction 3-deoxy-alpha-D-manno-oct-2-ulosonate + CTP = CMP-3-deoxy-beta-D-manno-octulosonate + diphosphate. The protein operates within nucleotide-sugar biosynthesis; CMP-3-deoxy-D-manno-octulosonate biosynthesis; CMP-3-deoxy-D-manno-octulosonate from 3-deoxy-D-manno-octulosonate and CTP: step 1/1. It participates in bacterial outer membrane biogenesis; lipopolysaccharide biosynthesis. Functionally, activates KDO (a required 8-carbon sugar) for incorporation into bacterial lipopolysaccharide in Gram-negative bacteria. The sequence is that of 3-deoxy-manno-octulosonate cytidylyltransferase from Chelativorans sp. (strain BNC1).